The sequence spans 339 residues: DNA-directed RNA polymerase subunit alpha (339 aa).

The tract at residues 1 to 233 is alpha N-terminal domain (alpha-NTD); that stretch reads MVREEVAGST…DLFLPFLHAE (233 aa). Residues 266–339 form an alpha C-terminal domain (alpha-CTD) region; the sequence is GIPLNCIFID…IDLLKNKLSF (74 aa).

This sequence belongs to the RNA polymerase alpha chain family. As to quaternary structure, in plastids the minimal PEP RNA polymerase catalytic core is composed of four subunits: alpha, beta, beta', and beta''. When a (nuclear-encoded) sigma factor is associated with the core the holoenzyme is formed, which can initiate transcription.

It localises to the plastid. The protein resides in the chloroplast. The enzyme catalyses RNA(n) + a ribonucleoside 5'-triphosphate = RNA(n+1) + diphosphate. DNA-dependent RNA polymerase catalyzes the transcription of DNA into RNA using the four ribonucleoside triphosphates as substrates. The sequence is that of DNA-directed RNA polymerase subunit alpha from Psathyrostachys juncea (Russian wildrye).